The sequence spans 258 residues: Imidazole glycerol phosphate synthase subunit HisF (258 aa).

Active-site residues include Asp-11 and Asp-130.

This sequence belongs to the HisA/HisF family. In terms of assembly, heterodimer of HisH and HisF.

It is found in the cytoplasm. The catalysed reaction is 5-[(5-phospho-1-deoxy-D-ribulos-1-ylimino)methylamino]-1-(5-phospho-beta-D-ribosyl)imidazole-4-carboxamide + L-glutamine = D-erythro-1-(imidazol-4-yl)glycerol 3-phosphate + 5-amino-1-(5-phospho-beta-D-ribosyl)imidazole-4-carboxamide + L-glutamate + H(+). The protein operates within amino-acid biosynthesis; L-histidine biosynthesis; L-histidine from 5-phospho-alpha-D-ribose 1-diphosphate: step 5/9. Its function is as follows. IGPS catalyzes the conversion of PRFAR and glutamine to IGP, AICAR and glutamate. The HisF subunit catalyzes the cyclization activity that produces IGP and AICAR from PRFAR using the ammonia provided by the HisH subunit. The sequence is that of Imidazole glycerol phosphate synthase subunit HisF from Escherichia coli O6:K15:H31 (strain 536 / UPEC).